Here is a 540-residue protein sequence, read N- to C-terminus: Cytochrome P450 monooxygenase ptmG (540 aa).

An N-linked (GlcNAc...) asparagine glycan is attached at N17. The next 2 membrane-spanning stretches (helical) occupy residues 20-40 (VMTLGQILVIPVALLVVYICI) and 325-345 (AAFLIGATSGASVISYAFLLL). Position 474 (C474) interacts with heme.

Belongs to the cytochrome P450 family. It depends on heme as a cofactor.

The protein localises to the membrane. It functions in the pathway secondary metabolite biosynthesis. Cytochrome P450 monooxygenase; part of the gene cluster that mediates the biosynthesis of the indole diterpenes penitrems. The geranylgeranyl diphosphate (GGPP) synthase ptmG catalyzes the first step in penitrem biosynthesis via conversion of farnesyl pyrophosphate and isopentyl pyrophosphate into geranylgeranyl pyrophosphate (GGPP). Condensation of indole-3-glycerol phosphate with GGPP by the prenyl transferase ptmC then forms 3-geranylgeranylindole (3-GGI). Epoxidation by the FAD-dependent monooxygenase ptmM leads to a epoxidized-GGI that is substrate of the terpene cyclase ptmB for cyclization to yield paspaline. Paspaline is subsequently converted to 13-desoxypaxilline by the cytochrome P450 monooxygenase ptmP, the latter being then converted to paxilline by the cytochrome P450 monooxygenase ptmQ. Paxilline is converted to beta-paxitriol via C-10 ketoreduction by the short-chain dehydrogenase ptmH which can be monoprenylated at the C-20 by the indole diterpene prenyltransferase ptmD. A two-step elimination (acetylation and elimination) process performed by the O-acetyltransferase ptmV and ptmI leads to the production of the prenylated form of penijanthine. The FAD-linked oxidoreductase ptmO then converts the prenylated form of penijanthine into PC-M5 which is in turn transformed into PC-M4 by the aromatic dimethylallyltransferase ptmE. Five sequential oxidative transformations performed by the cytochrome P450 monooxygenases ptmK, ptmU, ptmL, ptmN and ptmJ yield the various penitrem compounds. PtmK, ptmU and ptmM are involved in the formation of the key bicyclic ring of penitrem C via the formation of the intermediates secopenitrem D and penitrem D. PtmL catalyzes the epoxidation of penitrem D and C to yield penitrem B and F, respectively. PtmJ catalyzes the last benzylic hydroxylation to convert penitrem B to prenitrem E and penitrem F to penitrem A. The polypeptide is Cytochrome P450 monooxygenase ptmG (Penicillium ochrochloron).